We begin with the raw amino-acid sequence, 201 residues long: dTTP/UTP pyrophosphatase (201 aa).

The Proton acceptor role is filled by Asp-80.

It belongs to the Maf family. YhdE subfamily. It depends on a divalent metal cation as a cofactor.

It is found in the cytoplasm. It carries out the reaction dTTP + H2O = dTMP + diphosphate + H(+). It catalyses the reaction UTP + H2O = UMP + diphosphate + H(+). In terms of biological role, nucleoside triphosphate pyrophosphatase that hydrolyzes dTTP and UTP. May have a dual role in cell division arrest and in preventing the incorporation of modified nucleotides into cellular nucleic acids. This chain is dTTP/UTP pyrophosphatase, found in Novosphingobium aromaticivorans (strain ATCC 700278 / DSM 12444 / CCUG 56034 / CIP 105152 / NBRC 16084 / F199).